The primary structure comprises 346 residues: Histone PARylation factor 1 (346 aa).

N-acetylmethionine is present on Met1. Lys19, Lys186, and Lys233 each carry N6-acetyllysine. Asp235 carries the post-translational modification PolyADP-ribosyl aspartic acid. The residue at position 238 (Tyr238) is an ADP-ribosyltyrosine. A PolyADP-ribosyl glutamic acid modification is found at Glu240. The interaction with PARP1 stretch occupies residues 242–346; it reads PETDADLKRI…SEENIDQLAG (105 aa). Glu284 (proton donor) is an active-site residue.

This sequence belongs to the HPF1 family. Interacts with PARP1 (via the PARP catalytic domain). Interacts with PARP2 (via the PARP catalytic domain). Interacts with core nucleosomes in a PARP1- and PARP2-dependent manner.

The protein localises to the chromosome. The protein resides in the nucleus. Functionally, cofactor for serine ADP-ribosylation that confers serine specificity on PARP1 and PARP2 and plays a key role in DNA damage response. Initiates the repair of double-strand DNA breaks: recruited to DNA damage sites by PARP1 and PARP2 and switches the amino acid specificity of PARP1 and PARP2 from aspartate or glutamate to serine residues, licensing serine ADP-ribosylation of target proteins. Serine ADP-ribosylation of target proteins, such as histones, promotes decompaction of chromatin and the recruitment of repair factors leading to the reparation of DNA strand breaks. Serine ADP-ribosylation of proteins constitutes the primary form of ADP-ribosylation of proteins in response to DNA damage. HPF1 acts by completing the active site of PARP1 and PARP2: forms a composite active site composed of residues from HPF1 and PARP1 or PARP2. While HPF1 promotes the initiation of serine ADP-ribosylation, it restricts the polymerase activity of PARP1 and PARP2 in order to limit the length of poly-ADP-ribose chains. HPF1 also promotes tyrosine ADP-ribosylation, probably by conferring tyrosine specificity on PARP1. The chain is Histone PARylation factor 1 from Mus musculus (Mouse).